Here is a 474-residue protein sequence, read N- to C-terminus: Serine/threonine-protein kinase ksp1 (474 aa).

Positions Y9–T280 constitute a Protein kinase domain. Residues L15–V23 and K43 contribute to the ATP site. The active-site Proton acceptor is D137. The tract at residues V345–S373 is disordered. The span at S350–P363 shows a compositional bias: low complexity. A phosphoserine mark is found at S353, S354, S357, S378, S404, and S413.

Belongs to the protein kinase superfamily. Ser/Thr protein kinase family.

Its subcellular location is the cytoplasm. It localises to the nucleus. The enzyme catalyses L-seryl-[protein] + ATP = O-phospho-L-seryl-[protein] + ADP + H(+). It carries out the reaction L-threonyl-[protein] + ATP = O-phospho-L-threonyl-[protein] + ADP + H(+). The sequence is that of Serine/threonine-protein kinase ksp1 (ksp1) from Schizosaccharomyces pombe (strain 972 / ATCC 24843) (Fission yeast).